Consider the following 86-residue polypeptide: Insulin (86 aa).

Disulfide bonds link C7-C72, C19-C85, and C71-C76. The propeptide at 33–63 (ELEDPQVGQADPGVVPEAGRLQPLALEMTLQ) is c peptide.

It belongs to the insulin family. Heterodimer of a B chain and an A chain linked by two disulfide bonds.

The protein localises to the secreted. Functionally, insulin decreases blood glucose concentration. It increases cell permeability to monosaccharides, amino acids and fatty acids. It accelerates glycolysis, the pentose phosphate cycle, and glycogen synthesis in liver. The protein is Insulin (INS) of Chinchilla chinchilla (Short-tailed chinchilla).